Here is a 234-residue protein sequence, read N- to C-terminus: Large ribosomal subunit protein uL1 (234 aa).

It belongs to the universal ribosomal protein uL1 family. In terms of assembly, part of the 50S ribosomal subunit.

Binds directly to 23S rRNA. The L1 stalk is quite mobile in the ribosome, and is involved in E site tRNA release. Functionally, protein L1 is also a translational repressor protein, it controls the translation of the L11 operon by binding to its mRNA. The chain is Large ribosomal subunit protein uL1 from Wolinella succinogenes (strain ATCC 29543 / DSM 1740 / CCUG 13145 / JCM 31913 / LMG 7466 / NCTC 11488 / FDC 602W) (Vibrio succinogenes).